We begin with the raw amino-acid sequence, 347 residues long: Autoinducer 2 import system permease protein LsrC (347 aa).

The next 9 helical transmembrane spans lie at 14-34 (LLAI…YLSV), 39-59 (MVFS…MVML), 72-92 (GMCA…PVAC), 93-113 (LATL…VAWL), 115-135 (IPAI…MLLW), 155-175 (VFLG…LMAW), 213-233 (LNGG…GFIP), 249-269 (VLGG…ILGA), and 284-304 (IPAW…LVFD).

This sequence belongs to the binding-protein-dependent transport system permease family. AraH/RbsC subfamily. As to quaternary structure, the complex is composed of two ATP-binding proteins (LsrA), two transmembrane proteins (LsrC and LsrD) and a solute-binding protein (LsrB).

The protein localises to the cell inner membrane. Its function is as follows. Part of the ABC transporter complex LsrABCD involved in autoinducer 2 (AI-2) import. Probably responsible for the translocation of the substrate across the membrane. In Salmonella typhi, this protein is Autoinducer 2 import system permease protein LsrC (lsrC).